The sequence spans 349 residues: Magnesium-protoporphyrin IX monomethyl ester [oxidative] cyclase (349 aa).

Belongs to the AcsF family. The cofactor is Fe cation.

The protein localises to the plastid. It localises to the chloroplast. It carries out the reaction Mg-protoporphyrin IX 13-monomethyl ester + 3 NADPH + 3 O2 + 2 H(+) = 3,8-divinyl protochlorophyllide a + 3 NADP(+) + 5 H2O. Its pathway is porphyrin-containing compound metabolism; chlorophyll biosynthesis (light-independent). In terms of biological role, catalyzes the formation of the isocyclic ring in chlorophyll biosynthesis. Mediates the cyclase reaction, which results in the formation of divinylprotochlorophyllide (Pchlide) characteristic of all chlorophylls from magnesium-protoporphyrin IX 13-monomethyl ester (MgPMME). The polypeptide is Magnesium-protoporphyrin IX monomethyl ester [oxidative] cyclase (Pyropia yezoensis (Susabi-nori)).